The following is a 366-amino-acid chain: Proline-rich protein 19 (366 aa).

Disordered stretches follow at residues M1–C53, E102–V149, T256–G286, and A301–N338. The segment covering G18–R29 has biased composition (basic residues). 2 stretches are compositionally biased toward polar residues: residues H104–S113 and T256–Q265. The segment covering S275 to G286 has biased composition (low complexity). A compositionally biased stretch (pro residues) spans T302–L326.

In terms of assembly, interacts with CNTD1. In terms of tissue distribution, preferentially expressed in gonads.

The protein resides in the nucleus. It localises to the chromosome. Promotes meiotic crossing over formation through its interaction with CNTD1 by participating in the crossover differentiation step of crossover-specific recombination intermediates. The sequence is that of Proline-rich protein 19 from Mus musculus (Mouse).